A 198-amino-acid chain; its full sequence is MSKVLILKSSILGGYSQSAVLIDHLASHWETQGAAITVRDLGGKDVLPMVDGEIASGLRGGAELSARQQEMLALSDTLVSELKANDTIVIAAPMYNFTIPAQLKNWIDFIARAGVTFTYTETGPKGLVEGKRAVLVTTRGGAHKDGPTDHVVPYLKTVLGFIGITNVEVVYAEALNMGPEAHDKGMSEAKHSIDQLKA.

FMN-binding positions include serine 10, 16–18, 94–97, and 138–141; these read SQS, MYNF, and TRGG.

This sequence belongs to the azoreductase type 1 family. Homodimer. FMN is required as a cofactor.

The enzyme catalyses 2 a quinone + NADH + H(+) = 2 a 1,4-benzosemiquinone + NAD(+). It carries out the reaction N,N-dimethyl-1,4-phenylenediamine + anthranilate + 2 NAD(+) = 2-(4-dimethylaminophenyl)diazenylbenzoate + 2 NADH + 2 H(+). Its function is as follows. Quinone reductase that provides resistance to thiol-specific stress caused by electrophilic quinones. Functionally, also exhibits azoreductase activity. Catalyzes the reductive cleavage of the azo bond in aromatic azo compounds to the corresponding amines. The chain is FMN-dependent NADH:quinone oxidoreductase from Shewanella baltica (strain OS223).